Consider the following 225-residue polypeptide: 3-dehydroquinate dehydratase (225 aa).

Residues 30 to 32 (EWR) and Arg-62 each bind 3-dehydroquinate. The Proton donor/acceptor role is filled by His-118. Lys-143 acts as the Schiff-base intermediate with substrate in catalysis. 3-dehydroquinate-binding residues include Arg-186, Ser-205, and Gln-209.

The protein belongs to the type-I 3-dehydroquinase family. As to quaternary structure, homodimer.

It catalyses the reaction 3-dehydroquinate = 3-dehydroshikimate + H2O. The protein operates within metabolic intermediate biosynthesis; chorismate biosynthesis; chorismate from D-erythrose 4-phosphate and phosphoenolpyruvate: step 3/7. Involved in the third step of the chorismate pathway, which leads to the biosynthesis of aromatic amino acids. Catalyzes the cis-dehydration of 3-dehydroquinate (DHQ) and introduces the first double bond of the aromatic ring to yield 3-dehydroshikimate. The sequence is that of 3-dehydroquinate dehydratase from Streptococcus thermophilus (strain ATCC BAA-491 / LMD-9).